An 863-amino-acid chain; its full sequence is Scm-like with four MBT domains protein 1 (863 aa).

MBT repeat units follow at residues 20–120 (FSWE…LEAP), 128–232 (SDWS…LQPP), 242–346 (ADWQ…INPP), and 354–451 (FDWA…LSTP). A disordered region spans residues 638–773 (KKKNKRIGRP…SDGENKPPSP (136 aa)). Residues 660–679 (KTSKRRKRRKNIFVHKKKRS) show a composition bias toward basic residues. Residues 680-691 (SASVDNTPVGSP) are compositionally biased toward polar residues. The segment covering 696–710 (GEDEDDADDGDDDSL) has biased composition (acidic residues). Phosphoserine is present on residues S764 and S772. The SAM domain occupies 793-861 (WSVADVVRFI…RIKFAFYEQF (69 aa)).

In terms of assembly, interacts with MYOD1. Component of the SLC (SFMBT1-LSD1-CoREST) corepressor complex, which also contains KDM1A/LSD1 and RCOR1/CoREST. Interacts with KDM1A/LSD1 and RCOR1/CoREST. Interacts with MYOD1. Interacts with L3MBTL3. In terms of tissue distribution, highly expressed in the testis, low expression was detected in brain, kidney, heart and lung.

Its subcellular location is the nucleus. Functionally, histone-binding protein, which is part of various corepressor complexes. Mediates the recruitment of corepressor complexes to target genes, followed by chromatin compaction and repression of transcription. Plays a role during myogenesis: required for the maintenance of undifferentiated states of myogenic progenitor cells via interaction with MYOD1. Interaction with MYOD1 leads to the recruitment of associated corepressors and silencing of MYOD1 target genes. Part of the SLC complex in germ cells, where it may play a role during spermatogenesis. The polypeptide is Scm-like with four MBT domains protein 1 (Sfmbt1) (Rattus norvegicus (Rat)).